The chain runs to 420 residues: UDP-N-acetylglucosamine 1-carboxyvinyltransferase (420 aa).

Phosphoenolpyruvate is bound at residue 22-23 (KN). R93 lines the UDP-N-acetyl-alpha-D-glucosamine pocket. The active-site Proton donor is the C117. 2-(S-cysteinyl)pyruvic acid O-phosphothioketal is present on C117. 2 residues coordinate UDP-N-acetyl-alpha-D-glucosamine: D307 and I329.

Belongs to the EPSP synthase family. MurA subfamily.

The protein resides in the cytoplasm. It catalyses the reaction phosphoenolpyruvate + UDP-N-acetyl-alpha-D-glucosamine = UDP-N-acetyl-3-O-(1-carboxyvinyl)-alpha-D-glucosamine + phosphate. The protein operates within cell wall biogenesis; peptidoglycan biosynthesis. Its function is as follows. Cell wall formation. Adds enolpyruvyl to UDP-N-acetylglucosamine. This chain is UDP-N-acetylglucosamine 1-carboxyvinyltransferase, found in Shewanella pealeana (strain ATCC 700345 / ANG-SQ1).